The chain runs to 209 residues: uncharacterized protein (209 aa).

In terms of domain architecture, MPN spans 1–67 (MEILPKYKPE…LIMYNYWTID (67 aa)). The Zn(2+) site is built by H17, H19, and D30. The short motif at 17 to 30 (HTHPKGPAEPSIND) is the JAMM motif element.

This is an uncharacterized protein from Acidianus convivator (ATV).